The following is a 386-amino-acid chain: Succinyl-diaminopimelate desuccinylase (386 aa).

His-76 provides a ligand contact to Zn(2+). Residue Asp-78 is part of the active site. Residue Asp-110 participates in Zn(2+) binding. Glu-144 serves as the catalytic Proton acceptor. Zn(2+) contacts are provided by Glu-145, Glu-173, and His-359.

This sequence belongs to the peptidase M20A family. DapE subfamily. Homodimer. The cofactor is Zn(2+). Requires Co(2+) as cofactor.

The catalysed reaction is N-succinyl-(2S,6S)-2,6-diaminopimelate + H2O = (2S,6S)-2,6-diaminopimelate + succinate. Its pathway is amino-acid biosynthesis; L-lysine biosynthesis via DAP pathway; LL-2,6-diaminopimelate from (S)-tetrahydrodipicolinate (succinylase route): step 3/3. In terms of biological role, catalyzes the hydrolysis of N-succinyl-L,L-diaminopimelic acid (SDAP), forming succinate and LL-2,6-diaminopimelate (DAP), an intermediate involved in the bacterial biosynthesis of lysine and meso-diaminopimelic acid, an essential component of bacterial cell walls. The protein is Succinyl-diaminopimelate desuccinylase of Chromohalobacter salexigens (strain ATCC BAA-138 / DSM 3043 / CIP 106854 / NCIMB 13768 / 1H11).